Consider the following 520-residue polypeptide: GMP synthase [glutamine-hydrolyzing] (520 aa).

The region spanning 13–205 (KIIVLDYGSQ…ALNICKAKGD (193 aa)) is the Glutamine amidotransferase type-1 domain. The active-site Nucleophile is the C90. Residues H179 and E181 contribute to the active site. The region spanning 206-395 (WSMDNFIDMQ…LGMPDHIVWR (190 aa)) is the GMPS ATP-PPase domain. ATP is bound at residue 233-239 (SGGVDSS).

As to quaternary structure, homodimer.

The catalysed reaction is XMP + L-glutamine + ATP + H2O = GMP + L-glutamate + AMP + diphosphate + 2 H(+). It functions in the pathway purine metabolism; GMP biosynthesis; GMP from XMP (L-Gln route): step 1/1. Catalyzes the synthesis of GMP from XMP. In Streptococcus pneumoniae (strain ATCC 700669 / Spain 23F-1), this protein is GMP synthase [glutamine-hydrolyzing].